A 943-amino-acid polypeptide reads, in one-letter code: UvrABC system protein A (943 aa).

Residue 31–38 (GLSGSGKS) coordinates ATP. The C4-type zinc finger occupies 253-280 (CPHCGYSVPELEPRLFSFNNPAGACPTC). 2 ABC transporter domains span residues 310-587 (WDRR…PHSI) and 607-937 (LDKK…RFLK). 640–647 (GVSGSGKS) is an ATP binding site. The segment at 740-766 (CEACQGDGVIKVEMHFLPDVYVPCEQC) adopts a C4-type zinc-finger fold.

It belongs to the ABC transporter superfamily. UvrA family. As to quaternary structure, forms a heterotetramer with UvrB during the search for lesions.

It localises to the cytoplasm. Functionally, the UvrABC repair system catalyzes the recognition and processing of DNA lesions. UvrA is an ATPase and a DNA-binding protein. A damage recognition complex composed of 2 UvrA and 2 UvrB subunits scans DNA for abnormalities. When the presence of a lesion has been verified by UvrB, the UvrA molecules dissociate. This Pasteurella multocida (strain Pm70) protein is UvrABC system protein A.